We begin with the raw amino-acid sequence, 671 residues long: DNA ligase (671 aa).

NAD(+) contacts are provided by residues 32 to 36 (DAEYD), 81 to 82 (SL), and E113. K115 acts as the N6-AMP-lysine intermediate in catalysis. 4 residues coordinate NAD(+): R136, E173, K290, and K314. Residues C408, C411, C426, and C432 each contribute to the Zn(2+) site. The BRCT domain maps to 593-671 (EIDSPFAGKT…EAEMIRLLGA (79 aa)).

This sequence belongs to the NAD-dependent DNA ligase family. LigA subfamily. It depends on Mg(2+) as a cofactor. The cofactor is Mn(2+).

It catalyses the reaction NAD(+) + (deoxyribonucleotide)n-3'-hydroxyl + 5'-phospho-(deoxyribonucleotide)m = (deoxyribonucleotide)n+m + AMP + beta-nicotinamide D-nucleotide.. DNA ligase that catalyzes the formation of phosphodiester linkages between 5'-phosphoryl and 3'-hydroxyl groups in double-stranded DNA using NAD as a coenzyme and as the energy source for the reaction. It is essential for DNA replication and repair of damaged DNA. This chain is DNA ligase, found in Salmonella gallinarum (strain 287/91 / NCTC 13346).